Reading from the N-terminus, the 494-residue chain is MFEIKKICCIGAGYVGGPTCSVIAHMCPEIRVTVVDINESRINAWNSPTLPIYEPGLKEVVESCRGKNLFFSTNIDDAIKEADLVFISVNTPTKTYGMGKGRAADLKYIEACARRIVQNSHGYKIVTEKSTVPVRAAESIRRIFDANTKPNLNLQVLSNPEFLAEGTAIKDLKNPDRVLIGGDETPEGQRAVQALCAVYEHWVPREKILTTNTWSSELSKLTANAFLAQRISSINSISALCEATGADVEEVATAIGMDQRIGNKFLKASVGFGGSCFQKDVLNLVYLCEALNLPEVARYWQQVIDMNDYQRRRFASRIIDSLFNTVTDKKIAILGFAFKKDTGDTRESSSIYISKYLMDEGAHLHIYDPKVPREQIVVDLSHPGVSKDDQVARLVTISKDPYEACDGAHAVVICTEWDMFKELDYERIHKKMLKPAFIFDGRRVLDGLHNELQTIGFQIETIGKKVSSKRIPYAPSGEIPKFSLQDMPNKKPRV.

Residues 11–16 (GAGYVG), aspartate 36, arginine 41, and 89–93 (VNTPT) each bind NAD(+). A disordered region spans residues 88–110 (SVNTPTKTYGMGKGRAADLKYIE). An N6-acetyllysine modification is found at lysine 107. The allosteric switch region stretch occupies residues 129 to 135 (KSTVPVR). 130–132 (STV) is an NAD(+) binding site. The Proton donor/acceptor role is filled by glutamate 161. Substrate contacts are provided by residues 161–165 (EFLAE), 220–224 (KLTAN), arginine 260, and 267–273 (KASVGFG). Glutamate 165 provides a ligand contact to NAD(+). Lysine 220 functions as the Proton donor/acceptor in the catalytic mechanism. Cysteine 276 (nucleophile) is an active-site residue. 276–279 (CFQK) is a binding site for NAD(+). An important for formation of active hexamer structure region spans residues 321–325 (SLFNT). Substrate is bound at residue 338 to 339 (FK). Arginine 346 serves as a coordination point for NAD(+). Position 442 (arginine 442) interacts with substrate. The tract at residues 466-494 (VSSKRIPYAPSGEIPKFSLQDMPNKKPRV) is disordered. At serine 476 the chain carries Phosphoserine.

Belongs to the UDP-glucose/GDP-mannose dehydrogenase family. Homohexamer.

It carries out the reaction UDP-alpha-D-glucose + 2 NAD(+) + H2O = UDP-alpha-D-glucuronate + 2 NADH + 3 H(+). Its pathway is nucleotide-sugar biosynthesis; UDP-alpha-D-glucuronate biosynthesis; UDP-alpha-D-glucuronate from UDP-alpha-D-glucose: step 1/1. UDP-alpha-D-xylose (UDX) acts as a feedback inhibitor. It binds at the same site as the substrate, but functions as allosteric inhibitor by triggering a conformation change that disrupts the active hexameric ring structure and gives rise to an inactive, horseshoe-shaped hexamer. Catalyzes the formation of UDP-alpha-D-glucuronate, a constituent of complex glycosaminoglycans. Required for the biosynthesis of chondroitin sulfate and heparan sulfate. Required for embryonic development via its role in the biosynthesis of glycosaminoglycans. Required for proper brain and neuronal development. The polypeptide is UDP-glucose 6-dehydrogenase (UGDH) (Bos taurus (Bovine)).